The primary structure comprises 574 residues: MRPDSLVMAAPEGSLRKRKVGGAEHSPASQPSLARDPADSPARLHTGTFWLTRIVLLRALAFIYFVAFLVAFNQNKALIGDRGLLPCKLYLKNVQEYFQGSTGWAAWTYAPTIMWLLDWSDMNFNLDLIALLGLGISSFVLVTGCANMILMTALWALYMSLVNVGQIWYSFGWESQLLETGFLGIFLSPLWTLSRLPKNTPTSQIVLWGFRWLIFRIMLGAGLIKVRGDKCWLDLTCMDFHYETQPVPNPIAYYLHRSPWWFHRFETLSNHFVELLVPFFLFLGRRMRILHGVLQILFQVILIISGNLSFLNWLTIVPSLACFDDAALGFLFPSGPQGLKKQVLEIQREDTQRVQPKPRDRGCLVRQVVNISLGILVAWLSVPVVINLLSSRQIMNTSFNPLRIVNTYGAFGSVTKERTEVILQGTVSPNASAPDAVWEDYEFKCKPGDPWRQPCLISPYHYRLDWLMWFAAFQTYEQNEWILHLAGKLLAGDSEALALLAVNPFEGRTPPRWIRGEHYRYKFSLPGGQHATQGKWWIRKRIGPYFPPLRLEDLKEYFKTREWPLPEPPSRHTR.

The interval 1–39 is disordered; sequence MRPDSLVMAAPEGSLRKRKVGGAEHSPASQPSLARDPAD. The Cytoplasmic segment spans residues 1-49; that stretch reads MRPDSLVMAAPEGSLRKRKVGGAEHSPASQPSLARDPADSPARLHTGTF. Residues 50–72 form a helical membrane-spanning segment; sequence WLTRIVLLRALAFIYFVAFLVAF. Over 73-127 the chain is Lumenal; it reads NQNKALIGDRGLLPCKLYLKNVQEYFQGSTGWAAWTYAPTIMWLLDWSDMNFNLD. Residues 128–151 form a helical membrane-spanning segment; the sequence is LIALLGLGISSFVLVTGCANMILM. The Cytoplasmic portion of the chain corresponds to 152–207; that stretch reads TALWALYMSLVNVGQIWYSFGWESQLLETGFLGIFLSPLWTLSRLPKNTPTSQIVL. The chain crosses the membrane as a helical span at residues 208–221; the sequence is WGFRWLIFRIMLGA. The Lumenal portion of the chain corresponds to 222-292; that stretch reads GLIKVRGDKC…LGRRMRILHG (71 aa). A helical membrane pass occupies residues 293–321; that stretch reads VLQILFQVILIISGNLSFLNWLTIVPSLA. The Cytoplasmic portion of the chain corresponds to 322–367; that stretch reads CFDDAALGFLFPSGPQGLKKQVLEIQREDTQRVQPKPRDRGCLVRQ. Residues 368–388 form a helical membrane-spanning segment; the sequence is VVNISLGILVAWLSVPVVINL. Residues 389–574 lie on the Lumenal side of the membrane; the sequence is LSSRQIMNTS…LPEPPSRHTR (186 aa).

The protein belongs to the lipase maturation factor family. As to quaternary structure, interacts with LPL and SEL1L. As to expression, expressed in all tissues synthesizing lipoprotein lipase (Lpl) and hepatic lipase (Lipc), including adipose tissue, skeletal muscle, heart, and liver. Expressed at higher levels in tissues that express little or no lipase activity such as testis and pancreas suggesting additional functions in these tissues.

The protein localises to the endoplasmic reticulum membrane. Its function is as follows. Involved in the maturation of specific proteins in the endoplasmic reticulum. Required for maturation and transport of active lipoprotein lipase (LPL) through the secretory pathway. Each LMF1 molecule chaperones 50 or more molecules of LPL. The protein is Lipase maturation factor 1 (Lmf1) of Mus musculus (Mouse).